The primary structure comprises 338 residues: tRNA N6-adenosine threonylcarbamoyltransferase (338 aa).

Fe cation contacts are provided by histidine 111 and histidine 115. Residues 134 to 138, aspartate 167, glycine 180, and asparagine 272 contribute to the substrate site; that span reads LVSGG. Aspartate 300 contacts Fe cation.

This sequence belongs to the KAE1 / TsaD family. Requires Fe(2+) as cofactor.

Its subcellular location is the cytoplasm. The catalysed reaction is L-threonylcarbamoyladenylate + adenosine(37) in tRNA = N(6)-L-threonylcarbamoyladenosine(37) in tRNA + AMP + H(+). Its function is as follows. Required for the formation of a threonylcarbamoyl group on adenosine at position 37 (t(6)A37) in tRNAs that read codons beginning with adenine. Is involved in the transfer of the threonylcarbamoyl moiety of threonylcarbamoyl-AMP (TC-AMP) to the N6 group of A37, together with TsaE and TsaB. TsaD likely plays a direct catalytic role in this reaction. The chain is tRNA N6-adenosine threonylcarbamoyltransferase from Shewanella halifaxensis (strain HAW-EB4).